Reading from the N-terminus, the 264-residue chain is Putative hydro-lyase Psyr_0498 (264 aa).

This sequence belongs to the D-glutamate cyclase family.

The chain is Putative hydro-lyase Psyr_0498 from Pseudomonas syringae pv. syringae (strain B728a).